A 104-amino-acid polypeptide reads, in one-letter code: T-complex protein 1 subunit zeta (104 aa).

Gly-24 provides a ligand contact to ADP. ATP is bound at residue Gly-24. Position 75 (Asp-75) interacts with Mg(2+). 3 residues coordinate ADP: Gly-76, Thr-78, and Ser-79. ATP-binding residues include Gly-76 and Thr-78.

The protein belongs to the TCP-1 chaperonin family. Component of the chaperonin-containing T-complex (TRiC), a hexadecamer composed of two identical back-to-back stacked rings enclosing a protein folding chamber. Each ring is made up of eight different subunits: TCP1/CCT1, CCT2, CCT3, CCT4, CCT5, CCT6A/CCT6, CCT7, CCT8. Interacts with PACRG.

It localises to the cytoplasm. It catalyses the reaction ATP + H2O = ADP + phosphate + H(+). Its function is as follows. Component of the chaperonin-containing T-complex (TRiC), a molecular chaperone complex that assists the folding of actin, tubulin and other proteins upon ATP hydrolysis. The TRiC complex mediates the folding of WRAP53/TCAB1, thereby regulating telomere maintenance. The sequence is that of T-complex protein 1 subunit zeta (CCT6) from Sus scrofa (Pig).